A 319-amino-acid chain; its full sequence is Protein HEXIM1 (319 aa).

The segment covering M1–R22 has biased composition (basic and acidic residues). 4 disordered regions span residues M1–R111, L157–D223, N262–E286, and N299–S319. Residues S24–Q35 show a composition bias toward polar residues. Over residues P49 to T61 the composition is skewed to basic and acidic residues. A compositionally biased stretch (basic residues) spans G97–R111. The span at T185 to G202 shows a compositional bias: acidic residues. Gly residues predominate over residues G203–G216. Residues S240–P306 adopt a coiled-coil conformation. The span at P306–S319 shows a compositional bias: polar residues.

The protein belongs to the HEXIM family. In terms of assembly, homooligomer and heterooligomer. Core component of the 7SK RNP complex.

Its subcellular location is the nucleus. It is found in the cytoplasm. Functionally, transcriptional regulator which functions as a general RNA polymerase II transcription inhibitor. Core component of the 7SK RNP complex: in cooperation with 7SK snRNA sequesters P-TEFb in a large inactive 7SK snRNP complex preventing RNA polymerase II phosphorylation and subsequent transcriptional elongation. Plays a role in the regulation of DNA virus-mediated innate immune response by assembling into the HDP-RNP complex, a complex that serves as a platform for IRF3 phosphorylation and subsequent innate immune response activation through the cGAS-STING pathway. This is Protein HEXIM1 (hexim1) from Danio rerio (Zebrafish).